An 85-amino-acid chain; its full sequence is Putative regulatory protein DICTH_1339 (85 aa).

It belongs to the RemA family.

The polypeptide is Putative regulatory protein DICTH_1339 (Dictyoglomus thermophilum (strain ATCC 35947 / DSM 3960 / H-6-12)).